A 732-amino-acid chain; its full sequence is Guanylate cyclase soluble subunit alpha-2 (732 aa).

Positions 1-58 are disordered; the sequence is MSRRKISSESFSSLGSDYLETSPEEEGECPLSRLCWNGSRSPPGPLEPSPAAAAAAAA. A compositionally biased stretch (low complexity) spans 49–58; that stretch reads SPAAAAAAAA. Residues 521–648 enclose the Guanylate cyclase domain; it reads TMLFSDIVGF…NNVTLASKFE (128 aa).

It belongs to the adenylyl cyclase class-4/guanylyl cyclase family. In terms of assembly, heterodimer of an alpha and a beta chain. Isoform 1 is expressed in fetal brain, liver, colon, endothelium and testis. Isoform 2 is expressed only in liver, colon and endothelium.

Its subcellular location is the cytoplasm. The enzyme catalyses GTP = 3',5'-cyclic GMP + diphosphate. Activated by nitric oxide in the presence of magnesium or manganese ions. In terms of biological role, has guanylyl cyclase on binding to the beta-1 subunit. Its function is as follows. Isoform 2 acts as a negative regulator of guanylyl cyclase activity as it forms non-functional heterodimers with the beta subunits. This chain is Guanylate cyclase soluble subunit alpha-2 (GUCY1A2), found in Homo sapiens (Human).